The primary structure comprises 297 residues: Acetaldehyde dehydrogenase (297 aa).

Residue Cys-128 is the Acyl-thioester intermediate of the active site. NAD(+) is bound by residues 159 to 167 (SAGPGTRQN) and Asn-272.

This sequence belongs to the acetaldehyde dehydrogenase family.

It carries out the reaction acetaldehyde + NAD(+) + CoA = acetyl-CoA + NADH + H(+). This Desulfitobacterium hafniense (strain DSM 10664 / DCB-2) protein is Acetaldehyde dehydrogenase.